A 443-amino-acid polypeptide reads, in one-letter code: Thymidine phosphorylase (443 aa).

It belongs to the thymidine/pyrimidine-nucleoside phosphorylase family. As to quaternary structure, homodimer.

The catalysed reaction is thymidine + phosphate = 2-deoxy-alpha-D-ribose 1-phosphate + thymine. The protein operates within pyrimidine metabolism; dTMP biosynthesis via salvage pathway; dTMP from thymine: step 1/2. Its function is as follows. The enzymes which catalyze the reversible phosphorolysis of pyrimidine nucleosides are involved in the degradation of these compounds and in their utilization as carbon and energy sources, or in the rescue of pyrimidine bases for nucleotide synthesis. This is Thymidine phosphorylase from Shewanella putrefaciens (strain CN-32 / ATCC BAA-453).